The primary structure comprises 46 residues: DNA-directed RNA polymerase subunit Rpo12 (46 aa).

Zn(2+) is bound by residues Cys9, Cys24, and Cys27.

The protein belongs to the archaeal Rpo12/eukaryotic RPC10 RNA polymerase subunit family. Part of the RNA polymerase complex. Interacts with Rpo3. Forms an Rpo3-Rpo10-Rpo11-Rpo12 complex upon coexpression. Requires Zn(2+) as cofactor.

Its subcellular location is the cytoplasm. It catalyses the reaction RNA(n) + a ribonucleoside 5'-triphosphate = RNA(n+1) + diphosphate. In terms of biological role, DNA-dependent RNA polymerase (RNAP) catalyzes the transcription of DNA into RNA using the four ribonucleoside triphosphates as substrates. This Methanocaldococcus jannaschii (strain ATCC 43067 / DSM 2661 / JAL-1 / JCM 10045 / NBRC 100440) (Methanococcus jannaschii) protein is DNA-directed RNA polymerase subunit Rpo12.